The primary structure comprises 398 residues: Elongation factor Tu (398 aa).

The region spanning 10 to 207 (KPHVNIGTIG…TVDEYIPEPE (198 aa)) is the tr-type G domain. The G1 stretch occupies residues 19 to 26 (GHVDHGKT). Residue 19–26 (GHVDHGKT) participates in GTP binding. Residue Thr26 coordinates Mg(2+). The G2 stretch occupies residues 63–67 (GITIN). The G3 stretch occupies residues 84–87 (DAPG). GTP-binding positions include 84–88 (DAPGH) and 139–142 (NKVD). The segment at 139–142 (NKVD) is G4. The segment at 177 to 179 (SAL) is G5.

It belongs to the TRAFAC class translation factor GTPase superfamily. Classic translation factor GTPase family. EF-Tu/EF-1A subfamily. In terms of assembly, monomer.

Its subcellular location is the cytoplasm. The catalysed reaction is GTP + H2O = GDP + phosphate + H(+). Its function is as follows. GTP hydrolase that promotes the GTP-dependent binding of aminoacyl-tRNA to the A-site of ribosomes during protein biosynthesis. The chain is Elongation factor Tu from Streptococcus agalactiae serotype V (strain ATCC BAA-611 / 2603 V/R).